Consider the following 566-residue polypeptide: Cytoplasmic polyadenylation element-binding protein 2 (566 aa).

2 disordered regions span residues 17-46 and 64-98; these read FWGN…SVEG and LERL…IQEQ. Positions 87–98 are enriched in acidic residues; sequence DSEEEEEDIQEQ. The RRM domain maps to 430–512; the sequence is MVAFIGGVPR…KRVEIKPYFF (83 aa).

Cytoplasmic polyadenylation element binding protein that binds to and regulates the translation of specific mRNAs. This chain is Cytoplasmic polyadenylation element-binding protein 2 (cpb-2), found in Caenorhabditis briggsae.